The chain runs to 484 residues: Coronin-1B (484 aa).

S2 carries the post-translational modification Phosphoserine. WD repeat units lie at residues 80 to 120 (GHTG…LTSP), 130 to 170 (GHTK…ELYR), 174 to 213 (LHPD…LVAE), 217 to 260 (AHEG…EPMA), and 265 to 305 (DSSN…PYIH). The tract at residues 404–446 (LKVSRRNVLSDSRPASYSRSGASTATAVTDVPSGNLAGAGEAG) is disordered. Residues 410 to 430 (NVLSDSRPASYSRSGASTATA) show a composition bias toward polar residues. A coiled-coil region spans residues 444 to 482 (EAGKLEEVMQELRALRMLVKEQGERISRLEEQLGRMENG).

Belongs to the WD repeat coronin family. As to quaternary structure, forms homooligomers, but does not form complexes with the other coronins. Interacts with Arp2/3 complex components, including ACTR2, ARPC1B and ARPC2. Binds actin. Phosphorylation on Ser-2 regulates the interaction with the Arp2/3 complex and cell motility in fibroblasts. Phosphorylation does not seem to affect subcellular location. In terms of tissue distribution, ubiquitous.

The protein localises to the cytoplasm. It is found in the cytoskeleton. The protein resides in the stress fiber. Its function is as follows. Regulates leading edge dynamics and cell motility in fibroblasts. May be involved in cytokinesis and signal transduction. This is Coronin-1B (Coro1b) from Mus musculus (Mouse).